Here is a 328-residue protein sequence, read N- to C-terminus: NADH:quinone reductase (328 aa).

FMN contacts are provided by residues 22-24 (GMQ), threonine 75, lysine 124, alanine 150, 178-180 (SGG), and 201-202 (GT).

This sequence belongs to the nitronate monooxygenase family. Monomer. Requires FMN as cofactor.

It carries out the reaction a quinone + NADH + H(+) = a quinol + NAD(+). In terms of biological role, catalyzes the NADH-dependent reduction of a broad spectrum of quinone substrates, generating the corresponding hydroquinones. Highly prefers NADH to NADPH as a reducing substrate. Also displays a small NADH oxidase activity. Does not exhibit nitronate monooxygenase activity; is inactive against propionate 3-nitronate, 3-nitropropionate, nitroethane, 1-nitropropane, 2-nitropropane, and the anionic forms ethylnitronate, propyl-1-nitronate, and propyl-2-nitronate. Has no azoreductase activity since it is not able to reduce the azo dye methyl red with NADH. May be required to maintain an appropriate [NAD(+)]/[NADH] ratio for the catabolism of fatty acids in P.aeruginosa PAO1. This chain is NADH:quinone reductase, found in Pseudomonas aeruginosa (strain ATCC 15692 / DSM 22644 / CIP 104116 / JCM 14847 / LMG 12228 / 1C / PRS 101 / PAO1).